The following is a 122-amino-acid chain: Large ribosomal subunit protein uL14 (122 aa).

Belongs to the universal ribosomal protein uL14 family. As to quaternary structure, part of the 50S ribosomal subunit. Forms a cluster with proteins L3 and L19. In the 70S ribosome, L14 and L19 interact and together make contacts with the 16S rRNA in bridges B5 and B8.

Functionally, binds to 23S rRNA. Forms part of two intersubunit bridges in the 70S ribosome. This is Large ribosomal subunit protein uL14 from Finegoldia magna (strain ATCC 29328 / DSM 20472 / WAL 2508) (Peptostreptococcus magnus).